The chain runs to 256 residues: tRNA-cytidine(32) 2-sulfurtransferase 1 (256 aa).

A PP-loop motif motif is present at residues 38 to 43; it reads SGGKDS. Residues Cys113, Cys116, and Cys204 each contribute to the [4Fe-4S] cluster site.

This sequence belongs to the TtcA family. Homodimer. Mg(2+) is required as a cofactor. It depends on [4Fe-4S] cluster as a cofactor.

The protein localises to the cytoplasm. The enzyme catalyses cytidine(32) in tRNA + S-sulfanyl-L-cysteinyl-[cysteine desulfurase] + AH2 + ATP = 2-thiocytidine(32) in tRNA + L-cysteinyl-[cysteine desulfurase] + A + AMP + diphosphate + H(+). It participates in tRNA modification. Catalyzes the ATP-dependent 2-thiolation of cytidine in position 32 of tRNA, to form 2-thiocytidine (s(2)C32). The sulfur atoms are provided by the cysteine/cysteine desulfurase (IscS) system. This chain is tRNA-cytidine(32) 2-sulfurtransferase 1, found in Francisella philomiragia subsp. philomiragia (strain ATCC 25017 / CCUG 19701 / FSC 153 / O#319-036).